A 429-amino-acid chain; its full sequence is Ribosomal RNA small subunit methyltransferase B (429 aa).

S-adenosyl-L-methionine-binding positions include 254–260 (CAAPGGK), Asp277, Asp303, and Asp322. Catalysis depends on Cys375, which acts as the Nucleophile.

This sequence belongs to the class I-like SAM-binding methyltransferase superfamily. RsmB/NOP family.

It is found in the cytoplasm. It carries out the reaction cytidine(967) in 16S rRNA + S-adenosyl-L-methionine = 5-methylcytidine(967) in 16S rRNA + S-adenosyl-L-homocysteine + H(+). Functionally, specifically methylates the cytosine at position 967 (m5C967) of 16S rRNA. The chain is Ribosomal RNA small subunit methyltransferase B from Shigella boydii serotype 4 (strain Sb227).